The following is a 491-amino-acid chain: Glutamine synthetase (491 aa).

In terms of domain architecture, GS beta-grasp spans 23-111; the sequence is NNVRQVLCAF…MFGNVYEAWG (89 aa). A GS catalytic domain is found at 119–491; the sequence is PRGYVAKRYE…PWEFMKYFDI (373 aa). Mg(2+)-binding residues include Glu-143 and Glu-145. Glu-225 lines the ATP pocket. The Mg(2+) site is built by Glu-230 and Glu-238. L-glutamate-binding positions include 282–283 and Ala-283; that span reads NA. Residue His-287 participates in Mg(2+) binding. Residues 289-291 and Ser-291 contribute to the ATP site; that span reads HQS. L-glutamate is bound by residues Arg-344, Glu-350, and Arg-362. The ATP site is built by Arg-362 and Arg-367. Residue Glu-381 coordinates Mg(2+). Arg-383 contributes to the L-glutamate binding site.

It belongs to the glutamine synthetase family. Oligomer of 12 subunits arranged in the form of two hexagons. Mg(2+) is required as a cofactor.

It is found in the cytoplasm. The catalysed reaction is L-glutamate + NH4(+) + ATP = L-glutamine + ADP + phosphate + H(+). Its function is as follows. Probably involved in nitrogen metabolism via ammonium assimilation. Catalyzes the ATP-dependent biosynthesis of glutamine from glutamate and ammonia. Beta-glutamate is a much poorer substrate than alpha-glutamate. In Archaeoglobus fulgidus (strain ATCC 49558 / DSM 4304 / JCM 9628 / NBRC 100126 / VC-16), this protein is Glutamine synthetase.